Reading from the N-terminus, the 260-residue chain is Putative ABC transporter substrate-binding lipoprotein YvgL (260 aa).

A signal peptide spans 1-20 (MFKKYSIFIAALTAFLLVAG). The N-palmitoyl cysteine moiety is linked to residue C21. Residue C21 is the site of S-diacylglycerol cysteine attachment. Positions 43, 71, 151, 178, and 196 each coordinate molybdate.

Belongs to the bacterial solute-binding protein ModA family.

The protein resides in the cell membrane. This chain is Putative ABC transporter substrate-binding lipoprotein YvgL (yvgL), found in Bacillus subtilis (strain 168).